A 253-amino-acid polypeptide reads, in one-letter code: Pupal cuticle protein (253 aa).

The N-terminal stretch at 1-18 (MKSMIVVACLALACGAHA) is a signal peptide. Over residues 54-66 (LQQASKNNPNPND) the composition is skewed to polar residues. The interval 54–74 (LQQASKNNPNPNDDGSYDPRW) is disordered. 3 consecutive repeat copies span residues 97–100 (AAPA), 115–118 (AAPA), and 154–157 (AAPA). Residues 155–167 (APAQQQWNAPAHQ) are compositionally biased toward low complexity. 2 disordered regions span residues 155-178 (APAQ…QDWN) and 187-206 (APAH…APAH). Residues 189 to 201 (AHQSWNGAPSWQS) show a composition bias toward polar residues.

In terms of biological role, component of the cuticle of the pupae of silk moth. The polypeptide is Pupal cuticle protein (PCP) (Bombyx mori (Silk moth)).